Consider the following 109-residue polypeptide: Probable WRKY transcription factor 43 (109 aa).

Residues 24–89 (SDADILDDGY…YEGIHNHPCE (66 aa)) constitute a DNA-binding region (WRKY).

The protein belongs to the WRKY group II-c family.

Its subcellular location is the nucleus. Transcription factor. Interacts specifically with the W box (5'-(T)TGAC[CT]-3'), a frequently occurring elicitor-responsive cis-acting element. This is Probable WRKY transcription factor 43 (WRKY43) from Arabidopsis thaliana (Mouse-ear cress).